The chain runs to 252 residues: MERLLIVNADDFGLSKGQNYGIIEACRNGVVTSTTALVNGEAIDHAAQLSRGAPGLAVGMHFVLTMGKPLTEMPGLTREGMLGKWIWQMAEEGALPLEEISLELASQYQRFIELFGRKPTHIDSHHHVHMFPQIFPIVASFAAEQGIALRIDRQAVFNDSDLPGELRSSQGFSSAFYGEEISNALFLKVLDDSSHRGERSLEVMCHPAFIDNTIRQSAYCFPRLTELDVLTSASLKYAIAERGYRLGSYLDV.

The Mg(2+) site is built by His-61 and His-125.

It belongs to the YdjC deacetylase family. ChbG subfamily. Homodimer. Requires Mg(2+) as cofactor.

It is found in the cytoplasm. The enzyme catalyses N,N'-diacetylchitobiose + H2O = N-acetyl-beta-D-glucosaminyl-(1-&gt;4)-D-glucosamine + acetate. It carries out the reaction diacetylchitobiose-6'-phosphate + H2O = N'-monoacetylchitobiose-6'-phosphate + acetate. Its pathway is glycan degradation; chitin degradation. Its function is as follows. Involved in the degradation of chitin. ChbG is essential for growth on the acetylated chitooligosaccharides chitobiose and chitotriose but is dispensable for growth on cellobiose and chitosan dimer, the deacetylated form of chitobiose. Deacetylation of chitobiose-6-P and chitotriose-6-P is necessary for both the activation of the chb promoter by the regulatory protein ChbR and the hydrolysis of phosphorylated beta-glucosides by the phospho-beta-glucosidase ChbF. Catalyzes the removal of only one acetyl group from chitobiose-6-P to yield monoacetylchitobiose-6-P, the inducer of ChbR and the substrate of ChbF. The chain is Chitooligosaccharide deacetylase from Escherichia fergusonii (strain ATCC 35469 / DSM 13698 / CCUG 18766 / IAM 14443 / JCM 21226 / LMG 7866 / NBRC 102419 / NCTC 12128 / CDC 0568-73).